The primary structure comprises 151 residues: 3-hydroxyacyl-[acyl-carrier-protein] dehydratase FabZ (151 aa).

Histidine 54 is a catalytic residue.

The protein belongs to the thioester dehydratase family. FabZ subfamily.

It is found in the cytoplasm. The enzyme catalyses a (3R)-hydroxyacyl-[ACP] = a (2E)-enoyl-[ACP] + H2O. Involved in unsaturated fatty acids biosynthesis. Catalyzes the dehydration of short chain beta-hydroxyacyl-ACPs and long chain saturated and unsaturated beta-hydroxyacyl-ACPs. This Pectobacterium atrosepticum (strain SCRI 1043 / ATCC BAA-672) (Erwinia carotovora subsp. atroseptica) protein is 3-hydroxyacyl-[acyl-carrier-protein] dehydratase FabZ.